A 187-amino-acid chain; its full sequence is Cell division protein SepF (187 aa).

The interval 13–74 is disordered; sequence GLAEDDRYAE…PAPATTAQVT (62 aa). The segment covering 16–65 has biased composition (basic and acidic residues); sequence EDDRYAEDTEPETTRPRVEAAREVRVESRHEARPEVRHEPRPEVSVERRP.

The protein belongs to the SepF family. In terms of assembly, homodimer. Interacts with FtsZ.

It localises to the cytoplasm. Its function is as follows. Cell division protein that is part of the divisome complex and is recruited early to the Z-ring. Probably stimulates Z-ring formation, perhaps through the cross-linking of FtsZ protofilaments. Its function overlaps with FtsA. The polypeptide is Cell division protein SepF (Kineococcus radiotolerans (strain ATCC BAA-149 / DSM 14245 / SRS30216)).